A 210-amino-acid polypeptide reads, in one-letter code: Protein-L-isoaspartate O-methyltransferase (210 aa).

The active site involves S60.

Belongs to the methyltransferase superfamily. L-isoaspartyl/D-aspartyl protein methyltransferase family.

The protein resides in the cytoplasm. It carries out the reaction [protein]-L-isoaspartate + S-adenosyl-L-methionine = [protein]-L-isoaspartate alpha-methyl ester + S-adenosyl-L-homocysteine. In terms of biological role, catalyzes the methyl esterification of L-isoaspartyl residues in peptides and proteins that result from spontaneous decomposition of normal L-aspartyl and L-asparaginyl residues. It plays a role in the repair and/or degradation of damaged proteins. This Xylella fastidiosa (strain M12) protein is Protein-L-isoaspartate O-methyltransferase.